A 453-amino-acid polypeptide reads, in one-letter code: Bifunctional protein GlmU (453 aa).

Residues 1-225 (MNIVILAAGT…DWETLGVNSK (225 aa)) form a pyrophosphorylase region. Residues 6 to 9 (LAAG), lysine 20, glutamine 71, 76 to 77 (GT), 98 to 100 (YGD), glycine 135, glutamate 150, asparagine 165, and asparagine 223 contribute to the UDP-N-acetyl-alpha-D-glucosamine site. Aspartate 100 lines the Mg(2+) pocket. Mg(2+) is bound at residue asparagine 223. The linker stretch occupies residues 226–246 (AQLAELERIHQRNVADALLVE). An N-acetyltransferase region spans residues 247–453 (GVTLADPARV…GYVRPVKKKS (207 aa)). UDP-N-acetyl-alpha-D-glucosamine-binding residues include arginine 329 and lysine 347. The active-site Proton acceptor is histidine 359. UDP-N-acetyl-alpha-D-glucosamine-binding residues include tyrosine 362 and asparagine 373. Acetyl-CoA-binding positions include alanine 376, 382–383 (NY), serine 401, and alanine 419.

The protein in the N-terminal section; belongs to the N-acetylglucosamine-1-phosphate uridyltransferase family. It in the C-terminal section; belongs to the transferase hexapeptide repeat family. Homotrimer. It depends on Mg(2+) as a cofactor.

The protein resides in the cytoplasm. It catalyses the reaction alpha-D-glucosamine 1-phosphate + acetyl-CoA = N-acetyl-alpha-D-glucosamine 1-phosphate + CoA + H(+). It carries out the reaction N-acetyl-alpha-D-glucosamine 1-phosphate + UTP + H(+) = UDP-N-acetyl-alpha-D-glucosamine + diphosphate. The protein operates within nucleotide-sugar biosynthesis; UDP-N-acetyl-alpha-D-glucosamine biosynthesis; N-acetyl-alpha-D-glucosamine 1-phosphate from alpha-D-glucosamine 6-phosphate (route II): step 2/2. Its pathway is nucleotide-sugar biosynthesis; UDP-N-acetyl-alpha-D-glucosamine biosynthesis; UDP-N-acetyl-alpha-D-glucosamine from N-acetyl-alpha-D-glucosamine 1-phosphate: step 1/1. It functions in the pathway bacterial outer membrane biogenesis; LPS lipid A biosynthesis. Functionally, catalyzes the last two sequential reactions in the de novo biosynthetic pathway for UDP-N-acetylglucosamine (UDP-GlcNAc). The C-terminal domain catalyzes the transfer of acetyl group from acetyl coenzyme A to glucosamine-1-phosphate (GlcN-1-P) to produce N-acetylglucosamine-1-phosphate (GlcNAc-1-P), which is converted into UDP-GlcNAc by the transfer of uridine 5-monophosphate (from uridine 5-triphosphate), a reaction catalyzed by the N-terminal domain. The polypeptide is Bifunctional protein GlmU (Burkholderia vietnamiensis (strain G4 / LMG 22486) (Burkholderia cepacia (strain R1808))).